Here is a 218-residue protein sequence, read N- to C-terminus: Thiopurine S-methyltransferase (218 aa).

S-adenosyl-L-methionine contacts are provided by Trp10, Leu45, Glu66, and Arg123.

The protein belongs to the class I-like SAM-binding methyltransferase superfamily. TPMT family.

It is found in the cytoplasm. The catalysed reaction is S-adenosyl-L-methionine + a thiopurine = S-adenosyl-L-homocysteine + a thiopurine S-methylether.. The sequence is that of Thiopurine S-methyltransferase from Shewanella denitrificans (strain OS217 / ATCC BAA-1090 / DSM 15013).